We begin with the raw amino-acid sequence, 296 residues long: 33 kDa chaperonin (296 aa).

2 cysteine pairs are disulfide-bonded: Cys-238–Cys-240 and Cys-271–Cys-274.

The protein belongs to the HSP33 family. In terms of processing, under oxidizing conditions two disulfide bonds are formed involving the reactive cysteines. Under reducing conditions zinc is bound to the reactive cysteines and the protein is inactive.

It localises to the cytoplasm. Functionally, redox regulated molecular chaperone. Protects both thermally unfolding and oxidatively damaged proteins from irreversible aggregation. Plays an important role in the bacterial defense system toward oxidative stress. In Clostridium botulinum (strain ATCC 19397 / Type A), this protein is 33 kDa chaperonin.